Reading from the N-terminus, the 729-residue chain is Fatty acid oxidation complex subunit alpha (729 aa).

The tract at residues 1-189 (MLYQGESLYL…KVGLVQAVVA (189 aa)) is enoyl-CoA hydratase/isomerase. Asp296 provides a ligand contact to substrate. The segment at 311–729 (PVPQQAAVLG…HADVSHGQPA (419 aa)) is 3-hydroxyacyl-CoA dehydrogenase. Residues Met324, Asp343, 400–402 (VVE), Lys407, and Ser429 each bind NAD(+). The active-site For 3-hydroxyacyl-CoA dehydrogenase activity is the His450. Asn453 lines the NAD(+) pocket. Substrate is bound by residues Asn500 and Tyr660.

This sequence in the N-terminal section; belongs to the enoyl-CoA hydratase/isomerase family. In the C-terminal section; belongs to the 3-hydroxyacyl-CoA dehydrogenase family. As to quaternary structure, heterotetramer of two alpha chains (FadB) and two beta chains (FadA).

The catalysed reaction is a (3S)-3-hydroxyacyl-CoA + NAD(+) = a 3-oxoacyl-CoA + NADH + H(+). The enzyme catalyses a (3S)-3-hydroxyacyl-CoA = a (2E)-enoyl-CoA + H2O. It catalyses the reaction a 4-saturated-(3S)-3-hydroxyacyl-CoA = a (3E)-enoyl-CoA + H2O. It carries out the reaction (3S)-3-hydroxybutanoyl-CoA = (3R)-3-hydroxybutanoyl-CoA. The catalysed reaction is a (3Z)-enoyl-CoA = a 4-saturated (2E)-enoyl-CoA. The enzyme catalyses a (3E)-enoyl-CoA = a 4-saturated (2E)-enoyl-CoA. Its pathway is lipid metabolism; fatty acid beta-oxidation. Its function is as follows. Involved in the aerobic and anaerobic degradation of long-chain fatty acids via beta-oxidation cycle. Catalyzes the formation of 3-oxoacyl-CoA from enoyl-CoA via L-3-hydroxyacyl-CoA. It can also use D-3-hydroxyacyl-CoA and cis-3-enoyl-CoA as substrate. The protein is Fatty acid oxidation complex subunit alpha of Pectobacterium atrosepticum (strain SCRI 1043 / ATCC BAA-672) (Erwinia carotovora subsp. atroseptica).